We begin with the raw amino-acid sequence, 514 residues long: Cytochrome P450 87A3 (514 aa).

2 helical membrane passes run 36–56 (ASSM…VALL) and 315–335 (LMFV…TIGV). Cysteine 463 is a heme binding site.

This sequence belongs to the cytochrome P450 family. It depends on heme as a cofactor. As to expression, expressed in roots and coleoptiles, but not in leaves.

It localises to the cytoplasmic vesicle membrane. In Oryza sativa subsp. japonica (Rice), this protein is Cytochrome P450 87A3 (CYP87A3).